The following is a 153-amino-acid chain: Histone H2B.4 (153 aa).

Basic and acidic residues-rich tracts occupy residues methionine 1 to proline 28 and glutamate 36 to lysine 53. The tract at residues methionine 1 to lysine 61 is disordered. N6-acetyllysine occurs at positions 7 and 37. Residue lysine 149 forms a Glycyl lysine isopeptide (Lys-Gly) (interchain with G-Cter in ubiquitin) linkage.

This sequence belongs to the histone H2B family. In terms of assembly, the nucleosome is a histone octamer containing two molecules each of H2A, H2B, H3 and H4 assembled in one H3-H4 heterotetramer and two H2A-H2B heterodimers. The octamer wraps approximately 147 bp of DNA. Can be acetylated to form H2BK6ac and H2BK33ac. Post-translationally, monoubiquitinated by BRE1 to form H2BK143ub1 and deubiquitinated by UBP26. Required for heterochromatic histone H3 di- and trimethylation at H3K4me. May give a specific tag for epigenetic transcriptional activation.

It localises to the nucleus. The protein resides in the chromosome. Functionally, core component of nucleosome. Nucleosomes wrap and compact DNA into chromatin, limiting DNA accessibility to the cellular machineries which require DNA as a template. Histones thereby play a central role in transcription regulation, DNA repair, DNA replication and chromosomal stability. DNA accessibility is regulated via a complex set of post-translational modifications of histones, also called histone code, and nucleosome remodeling. This Oryza sativa subsp. indica (Rice) protein is Histone H2B.4 (H2B.4).